The sequence spans 867 residues: Respiratory burst oxidase homolog protein B (867 aa).

Residues methionine 1–arginine 13 are compositionally biased toward basic and acidic residues. Residues methionine 1–serine 20 are disordered. Residues methionine 1–arginine 322 lie on the Cytoplasmic side of the membrane. A phosphoserine; by CPK mark is found at serine 82 and serine 97. EF-hand-like regions lie at residues alanine 141–serine 149 and arginine 175–glutamate 186. 2 EF-hand domains span residues serine 198–alanine 233 and asparagine 242–histidine 277. Ca(2+) contacts are provided by aspartate 211, aspartate 213, aspartate 215, arginine 217, and glutamate 222. The helical transmembrane segment at isoleucine 323 to glutamine 343 threads the bilayer. The Extracellular segment spans residues tyrosine 344–serine 358. A helical transmembrane segment spans residues valine 359–cysteine 379. In terms of domain architecture, Ferric oxidoreductase spans lysine 361–isoleucine 519. Topologically, residues arginine 380–valine 407 are cytoplasmic. Residues isoleucine 408–phenylalanine 428 traverse the membrane as a helical segment. Residues proline 429–glycine 463 lie on the Extracellular side of the membrane. Residues tryptophan 464–phenylalanine 484 traverse the membrane as a helical segment. Residues arginine 485 to tyrosine 506 are Cytoplasmic-facing. A helical transmembrane segment spans residues serine 507–leucine 527. Topologically, residues serine 528–aspartate 686 are extracellular. The FAD-binding FR-type domain maps to serine 558–aspartate 681. A helical membrane pass occupies residues valine 687–valine 707. The Cytoplasmic segment spans residues leucine 708–phenylalanine 867.

The protein belongs to the RBOH (TC 5.B.1.3) family. Monomer and homodimer. In terms of processing, phosphorylation at Ser-82 and Ser-97 is required for full activity of RBOHB. Not phosphorylated at Ser-89. Phosphorylation at Ser-82 is induced by fungal elicitor treatment.

It is found in the cell membrane. Inhibited by diphenylene iodinium (DPI). In terms of biological role, calcium-dependent NADPH oxidase that generates superoxide. Involved in the massive phase II oxidative burst induced by pathogen infection. The polypeptide is Respiratory burst oxidase homolog protein B (RBOHB) (Solanum tuberosum (Potato)).